Here is a 625-residue protein sequence, read N- to C-terminus: Grainyhead-like protein 2 homolog (625 aa).

Positions methionine 1 to aspartate 93 are transcription activation. Disordered stretches follow at residues alanine 198–aspartate 222 and glutamate 428–glycine 452. One can recognise a Grh/CP2 DB domain in the interval glycine 244–isoleucine 482. A compositionally biased stretch (polar residues) spans glutamine 440–aspartate 451.

Belongs to the grh/CP2 family. Grainyhead subfamily. As to quaternary structure, homodimer, also forms heterodimers with GRHL1 or GRHL3.

The protein resides in the nucleus. Its subcellular location is the membrane. In terms of biological role, transcription factor playing an important role in primary neurulation and in epithelial development. Binds directly to the consensus DNA sequence 5'-AACCGGTT-3' acting as an activator and repressor on distinct target genes. During embryogenesis, plays unique and cooperative roles with GRHL3 in establishing distinct zones of primary neurulation. Essential for closure 3 (rostral end of the forebrain), functions cooperatively with GRHL3 in closure 2 (forebrain/midbrain boundary) and posterior neuropore closure. Regulates epithelial morphogenesis acting as a target gene-associated transcriptional activator of apical junctional complex components. Up-regulates of CLDN3 and CLDN4, as well as of RAB25, which increases the CLDN4 protein and its localization at tight junctions. Comprises an essential component of the transcriptional machinery that establishes appropriate expression levels of CLDN4 and CDH1 in different types of epithelia. Exhibits functional redundancy with GRHL3 in epidermal morphogenetic events such as eyelid fusion and epidermal wound repair. In lung, forms a regulatory loop with NKX2-1 that coordinates lung epithelial cell morphogenesis and differentiation. In keratinocytes, plays a role in telomerase activation during cellular proliferation, regulates TERT expression by binding to TERT promoter region and inhibiting DNA methylation at the 5'-CpG island, possibly by interfering with DNMT1 enzyme activity. In addition, impairs keratinocyte differentiation and epidermal function by inhibiting the expression of genes clustered at the epidermal differentiation complex (EDC) as well as GRHL1 and GRHL3 through epigenetic mechanisms. The sequence is that of Grainyhead-like protein 2 homolog (Grhl2) from Mus musculus (Mouse).